Reading from the N-terminus, the 766-residue chain is Protein translocase subunit SecA 2 (766 aa).

ATP contacts are provided by residues Gln-84, 102-106 (GEGKT), and Asp-490.

This sequence belongs to the SecA family. Monomer and homodimer. Part of the essential Sec protein translocation apparatus which comprises SecA, SecYEG and auxiliary proteins SecDF. Other proteins may also be involved.

The protein localises to the cell membrane. It is found in the cytoplasm. It carries out the reaction ATP + H2O + cellular proteinSide 1 = ADP + phosphate + cellular proteinSide 2.. Part of the Sec protein translocase complex. Interacts with the SecYEG preprotein conducting channel. Has a central role in coupling the hydrolysis of ATP to the transfer of proteins into and across the cell membrane, serving as an ATP-driven molecular motor driving the stepwise translocation of polypeptide chains across the membrane. This chain is Protein translocase subunit SecA 2, found in Thermobifida fusca (strain YX).